The sequence spans 2837 residues: Bifunctional DNA-directed RNA polymerase subunit beta-beta' (2837 aa).

The tract at residues 1-1433 is DNA-directed RNA polymerase subunit beta; it reads MVDSSYMYAS…CLNVDLKQND (1433 aa). Residues 1436–2837 are DNA-directed RNA polymerase subunit beta'; that stretch reads IEDISHTNIA…ESVVAYDQSN (1402 aa). Zn(2+) contacts are provided by cysteine 1501, cysteine 1503, cysteine 1516, and cysteine 1519. Aspartate 1893, aspartate 1895, and aspartate 1897 together coordinate Mg(2+). 4 residues coordinate Zn(2+): cysteine 2235, cysteine 2309, cysteine 2316, and cysteine 2319.

It in the N-terminal section; belongs to the RNA polymerase beta chain family. In the C-terminal section; belongs to the RNA polymerase beta' chain family. As to quaternary structure, the RNAP catalytic core consists of 2 alpha, 1 beta/beta' and 1 omega subunit. When a sigma factor is associated with the core the holoenzyme is formed, which can initiate transcription. The cofactor is Mg(2+). Zn(2+) serves as cofactor.

It carries out the reaction RNA(n) + a ribonucleoside 5'-triphosphate = RNA(n+1) + diphosphate. Its function is as follows. DNA-dependent RNA polymerase catalyzes the transcription of DNA into RNA using the four ribonucleoside triphosphates as substrates. In Wolbachia pipientis wMel, this protein is Bifunctional DNA-directed RNA polymerase subunit beta-beta' (rpoBC).